Reading from the N-terminus, the 97-residue chain is Small integral membrane protein 8 (97 aa).

Positions 1 to 24 (MSSAPEPPTFKKEPPKEKDFQSPG) are disordered. Basic and acidic residues predominate over residues 9–20 (TFKKEPPKEKDF). Residues 48–67 (PVMAFGLVTLSLCVAYIGYL) form a helical membrane-spanning segment.

The protein belongs to the SMIM8 family.

It is found in the membrane. This is Small integral membrane protein 8 (SMIM8) from Pongo abelii (Sumatran orangutan).